The primary structure comprises 218 residues: MDKSESASAGRNRRRRPRRGSRSASSSSDANFRVLSQQLSRLNKTLAAGRPTINHPTFVGSERCKPGYTFTSITLKPPKIDRGSYYGKRLLLPDSVAEFDKKLVSRIQIRVNPLPKFDSTVWVTVRKVPASSDLSVTAISAMFADGASPVLVYQYAASGIQANNKLLYDLSAMRADIGDMRKYAVLVYSKDDALETDELVLHVDIEHQRIPTSRVLPV.

Residue M1 is modified to N-acetylmethionine; by host. A compositionally biased stretch (low complexity) spans 1-10; sequence MDKSESASAG. Residues 1 to 30 form a disordered region; sequence MDKSESASAGRNRRRRPRRGSRSASSSSDA. The segment covering 11-21 has biased composition (basic residues); sequence RNRRRRPRRGS.

The protein belongs to the cucumovirus capsid protein family.

The protein localises to the virion. Functionally, capsid protein. Probably binds RNA and plays a role in packaging. In Cucumis sativus (Cucumber), this protein is Capsid protein.